The following is a 994-amino-acid chain: Glutamate [NMDA] receptor subunit 1 (994 aa).

A signal peptide spans 1-23 (MAADGFVYRWLLFGTTIVLLAEA). Residues 24–570 (AQRHTASDNP…TLVSFLQPFS (547 aa)) lie on the Extracellular side of the membrane. Asn255, Asn311, Asn342, Asn394, Asn451, Asn478, and Asn498 each carry an N-linked (GlcNAc...) asparagine glycan. Glycine is bound by residues 527-529 (PLT) and Arg534. Residues 571 to 591 (NTLWILVMVSVHVVALVLYLL) form a helical membrane-spanning segment. Residues 592–648 (DRFSPFGRFKLSHSDSNEEKALNLSSAVWFAWGVLLNSGIGEGTPRSFSARVLGMVW) lie on the Cytoplasmic side of the membrane. Residues 649–669 (AGFAMIIVASYTANLAAFLVL) traverse the membrane as a helical segment. Residues 670–828 (ERPKTKLSGI…KTPNTLGLKN (159 aa)) lie on the Extracellular side of the membrane. Residue Asn690 is glycosylated (N-linked (GlcNAc...) asparagine). Ser700 and Asp744 together coordinate glycine. Residues 829 to 849 (MAGVFILVGVGIAGGVGLIII) form a helical membrane-spanning segment. Residues 850 to 994 (EVIYKKHQVK…YTSDVSHLVV (145 aa)) are Cytoplasmic-facing. Residues 971–994 (RPQQNMLPPRYSPGYTSDVSHLVV) are disordered. Polar residues predominate over residues 984–994 (GYTSDVSHLVV).

This sequence belongs to the glutamate-gated ion channel (TC 1.A.10.1) family. As to quaternary structure, forms a heteromeric NMDA channel with Nmdar2.

It localises to the cell membrane. The protein localises to the postsynaptic cell membrane. The protein resides in the postsynaptic density. In terms of biological role, NMDA receptor subtype of glutamate-gated ion channels with high calcium permeability and voltage-dependent sensitivity to magnesium. Mediated by glycine. This protein plays a key role in synaptic plasticity, synaptogenesis, excitotoxicity, memory acquisition and learning. It mediates neuronal functions in glutamate neurotransmission. Is involved in the cell surface targeting of NMDA receptors. Plays a role in associative learning and in long-term memory consolidation. The protein is Glutamate [NMDA] receptor subunit 1 of Drosophila ananassae (Fruit fly).